Here is a 257-residue protein sequence, read N- to C-terminus: BTB/POZ domain-containing protein KCTD1 (257 aa).

The interval 1–25 is disordered; it reads MSRPLITRSPASPLNNQGIPTPAQL. Serine 9 and serine 12 each carry phosphoserine. A compositionally biased stretch (polar residues) spans 9–25; it reads SPASPLNNQGIPTPAQL. Residues 30–100 enclose the BTB domain; the sequence is APVHIDVGGH…LRTSKLLIPD (71 aa).

In terms of assembly, forms homopentamers. Interacts with KCTD15, probably forming heteropentamers depending on its abundance in a cell-type dependent manner. Interacts with TFAP2A, TFAP2B and TFAP2C via the BTB domain. Post-translationally, sumoylated.

The protein localises to the nucleus. In terms of biological role, may repress the transcriptional activity of AP-2 family members, including TFAP2A, TFAP2B and TFAP2C to various extent. The chain is BTB/POZ domain-containing protein KCTD1 (KCTD1) from Bos taurus (Bovine).